The chain runs to 120 residues: Large ribosomal subunit protein bL12 (120 aa).

It belongs to the bacterial ribosomal protein bL12 family. In terms of assembly, homodimer. Part of the ribosomal stalk of the 50S ribosomal subunit. Forms a multimeric L10(L12)X complex, where L10 forms an elongated spine to which 2 to 4 L12 dimers bind in a sequential fashion. Binds GTP-bound translation factors.

Its function is as follows. Forms part of the ribosomal stalk which helps the ribosome interact with GTP-bound translation factors. Is thus essential for accurate translation. The sequence is that of Large ribosomal subunit protein bL12 from Listeria welshimeri serovar 6b (strain ATCC 35897 / DSM 20650 / CCUG 15529 / CIP 8149 / NCTC 11857 / SLCC 5334 / V8).